The following is a 355-amino-acid chain: Peptide chain release factor 1 (355 aa).

Glutamine 233 bears the N5-methylglutamine mark. Residues 280–293 (KRRQKEQERSDSRR) are compositionally biased toward basic and acidic residues. Positions 280-310 (KRRQKEQERSDSRRGQVGSGDRSERIRTYNF) are disordered.

This sequence belongs to the prokaryotic/mitochondrial release factor family. Post-translationally, methylated by PrmC. Methylation increases the termination efficiency of RF1.

The protein resides in the cytoplasm. Peptide chain release factor 1 directs the termination of translation in response to the peptide chain termination codons UAG and UAA. This Rickettsia prowazekii (strain Madrid E) protein is Peptide chain release factor 1 (prfA).